Here is a 250-residue protein sequence, read N- to C-terminus: MSLATNNAESKFPSLQRLPNHVAIIMDGNRRWYKKHREECGHTHTSGHYYGAKVLPNILNAVLDLGIKVLTLYTFSTENFGRPKEEIQEIFNIFYTQLDKQLPYLMENEICLRCIGDLSKLPKGIQTKINHVSRMTASFSRLELVLAVNYGGKDELVRAFKKLHVDILNKKISSDDLSESLISSYLDTSGLTDPDLLIRTGGEMRVSNFLLWQIAYTELYITDTLWPDFTPQDLFEAINVYQQRSRRGGK.

Residue aspartate 27 is part of the active site. Residue aspartate 27 participates in Mg(2+) binding. Substrate-binding positions include 28 to 31, tryptophan 32, histidine 48, and 76 to 78; these read GNRR and STE. Asparagine 79 (proton acceptor) is an active-site residue. Residues phenylalanine 80, arginine 82, arginine 199, and 205–207 contribute to the substrate site; that span reads RVS. Glutamate 218 is a Mg(2+) binding site.

Belongs to the UPP synthase family. Homodimer. Mg(2+) is required as a cofactor.

Catalyzes the condensation of isopentenyl diphosphate (IPP) with allylic pyrophosphates generating different type of terpenoids. The protein is Isoprenyl transferase of Chlamydia pneumoniae (Chlamydophila pneumoniae).